The sequence spans 415 residues: von Willebrand factor A domain-containing protein 1 (415 aa).

The first 18 residues, 1-18 (MLFWTVLSMALSLRLALA), serve as a signal peptide directing secretion. In terms of domain architecture, VWFA spans 34 to 213 (DLLFLLDSSA…ELRGAIIDAM (180 aa)). A phosphoserine mark is found at Ser-74, Ser-80, and Ser-93. Fibronectin type-III domains lie at 214–305 (QPHQ…LQEE) and 307–405 (GPER…VPQA). N-linked (GlcNAc...) asparagine glycosylation occurs at Asn-264. A disulfide bridge links Cys-369 with Cys-393.

Homodimer or homomultimer; disulfide-linked. Interacts with HSPG2. N-glycosylated.

The protein resides in the secreted. It is found in the extracellular space. The protein localises to the extracellular matrix. It localises to the basement membrane. Promotes matrix assembly. Involved in the organization of skeletal muscles and in the formation of neuromuscular junctions. This is von Willebrand factor A domain-containing protein 1 (Vwa1) from Rattus norvegicus (Rat).